Here is a 364-residue protein sequence, read N- to C-terminus: DNA primase large subunit PriL (364 aa).

Residues Cys-237, Cys-309, Cys-318, and Cys-325 each coordinate [4Fe-4S] cluster. Residues 345 to 364 (MQNDNEKGHEEKKEGETPPQ) are disordered.

The protein belongs to the eukaryotic-type primase large subunit family. As to quaternary structure, heterodimer of a small subunit (PriS) and a large subunit (PriL). It depends on [4Fe-4S] cluster as a cofactor.

In terms of biological role, regulatory subunit of DNA primase, an RNA polymerase that catalyzes the synthesis of short RNA molecules used as primers for DNA polymerase during DNA replication. Stabilizes and modulates the activity of the small subunit, increasing the rate of DNA synthesis, and conferring RNA synthesis capability. The DNA polymerase activity may enable DNA primase to also catalyze primer extension after primer synthesis. May also play a role in DNA repair. This chain is DNA primase large subunit PriL, found in Methanococcoides burtonii (strain DSM 6242 / NBRC 107633 / OCM 468 / ACE-M).